The sequence spans 912 residues: Probable transmembrane GTPase FZO-like, chloroplastic (912 aa).

Residues 1–54 (MRTLISHRQCVTSPFLISAASPPFPGRCFKLSSFTPPRHRRFSSLSIRNISHES) constitute a chloroplast transit peptide. The segment at 51–71 (SHESADQTSSSRPRTLYPGGY) is disordered. The Stromal segment spans residues 55-773 (ADQTSSSRPR…SKRLEQDIRE (719 aa)). Residues 359–364 (NSGKST) and serine 521 contribute to the GTP site. The helical transmembrane segment at 774-794 (VFFVTVGGLGAAGLSASLLTS) threads the bilayer. The Chloroplast intermembrane portion of the chain corresponds to 795 to 801 (VLPTTLE). A helical membrane pass occupies residues 802-822 (DLLALGLCSAGGYVAIANFPY). Residues 823–912 (RRQAIIGKVN…LHVSRDEMRL (90 aa)) lie on the Stromal side of the membrane. A coiled-coil region spans residues 877–904 (DRLLGIQKELSDIRSKLQLLQVDIDNLH).

The protein belongs to the TRAFAC class dynamin-like GTPase superfamily. Dynamin/Fzo/YdjA family. Mitofusin subfamily.

It is found in the plastid. The protein resides in the chloroplast inner membrane. It localises to the chloroplast thylakoid membrane. Functionally, probable membrane-remodeling GTPase that plays a unique role in the in the determination of thylakoid and chloroplast morphology and regulates organization of the thylakoid network. Not involved in the determination of mitochondrial morphology or ultrastructure. In Arabidopsis thaliana (Mouse-ear cress), this protein is Probable transmembrane GTPase FZO-like, chloroplastic.